The chain runs to 435 residues: Zinc finger CCCH domain-containing protein 67 (435 aa).

Residues M1–E91 are disordered. 3 C3H1-type zinc fingers span residues R101 to R129, N148 to E176, and R194 to P222. The tract at residues G235 to P274 is disordered. Over residues S247–S256 the composition is skewed to low complexity. 2 consecutive C3H1-type zinc fingers follow at residues R334 to N362 and R380 to P408. The disordered stretch occupies residues S412 to H435.

It is found in the nucleus. This Arabidopsis thaliana (Mouse-ear cress) protein is Zinc finger CCCH domain-containing protein 67.